The following is a 292-amino-acid chain: Coatomer subunit epsilon-1 (292 aa).

The protein belongs to the COPE family. Oligomeric complex that consists of at least the alpha, beta, beta', gamma, delta, epsilon and zeta subunits.

The protein localises to the cytoplasm. The protein resides in the golgi apparatus membrane. Its subcellular location is the cytoplasmic vesicle. It localises to the COPI-coated vesicle membrane. Functionally, the coatomer is a cytosolic protein complex that binds to dilysine motifs and reversibly associates with Golgi non-clathrin-coated vesicles, which further mediate biosynthetic protein transport from the ER, via the Golgi up to the trans Golgi network. The coatomer complex is required for budding from Golgi membranes, and is essential for the retrograde Golgi-to-ER transport of dilysine-tagged proteins. This is Coatomer subunit epsilon-1 from Arabidopsis thaliana (Mouse-ear cress).